The following is a 635-amino-acid chain: DNA-directed RNA polymerase subunit gamma (635 aa).

4 residues coordinate Zn(2+): Cys74, Cys76, Cys89, and Cys92. Residues Asp471, Asp473, and Asp475 each coordinate Mg(2+).

It belongs to the RNA polymerase beta' chain family. RpoC1 subfamily. In cyanobacteria the RNAP catalytic core is composed of 2 alpha, 1 beta, 1 beta', 1 gamma and 1 omega subunit. When a sigma factor is associated with the core the holoenzyme is formed, which can initiate transcription. Requires Mg(2+) as cofactor. It depends on Zn(2+) as a cofactor.

The enzyme catalyses RNA(n) + a ribonucleoside 5'-triphosphate = RNA(n+1) + diphosphate. DNA-dependent RNA polymerase catalyzes the transcription of DNA into RNA using the four ribonucleoside triphosphates as substrates. The sequence is that of DNA-directed RNA polymerase subunit gamma from Prochlorococcus marinus (strain NATL1A).